Reading from the N-terminus, the 500-residue chain is Glycerol kinase (500 aa).

Thr-13 is an ADP binding site. Positions 13, 14, and 15 each coordinate ATP. Thr-13 provides a ligand contact to sn-glycerol 3-phosphate. Residue Arg-17 participates in ADP binding. Sn-glycerol 3-phosphate is bound by residues Arg-83, Glu-84, Tyr-135, and Asp-245. Glycerol contacts are provided by Arg-83, Glu-84, Tyr-135, Asp-245, and Gln-246. Thr-267 and Gly-310 together coordinate ADP. Residues Thr-267, Gly-310, Gln-314, and Gly-411 each contribute to the ATP site. 2 residues coordinate ADP: Gly-411 and Asn-415.

It belongs to the FGGY kinase family. As to quaternary structure, homotetramer and homodimer (in equilibrium).

It catalyses the reaction glycerol + ATP = sn-glycerol 3-phosphate + ADP + H(+). It participates in polyol metabolism; glycerol degradation via glycerol kinase pathway; sn-glycerol 3-phosphate from glycerol: step 1/1. Activated by phosphorylation and inhibited by fructose 1,6-bisphosphate (FBP). In terms of biological role, key enzyme in the regulation of glycerol uptake and metabolism. Catalyzes the phosphorylation of glycerol to yield sn-glycerol 3-phosphate. This chain is Glycerol kinase, found in Lactobacillus acidophilus (strain ATCC 700396 / NCK56 / N2 / NCFM).